Here is a 721-residue protein sequence, read N- to C-terminus: Glycine--tRNA ligase beta subunit (721 aa).

Belongs to the class-II aminoacyl-tRNA synthetase family. Tetramer of two alpha and two beta subunits.

Its subcellular location is the cytoplasm. The enzyme catalyses tRNA(Gly) + glycine + ATP = glycyl-tRNA(Gly) + AMP + diphosphate. This is Glycine--tRNA ligase beta subunit from Sinorhizobium medicae (strain WSM419) (Ensifer medicae).